The sequence spans 133 residues: MTRLGLVVAEFNRSVTERMEAAAREAAADADAAITDTVHVPGAYDSPLAADRLARRDDIDAVAVVGAIVTGDTDHDHVIASATADTLTDVSLERDTPVTFGVSGPGMSGAEARERVEKGAAAVESAVSLTQEL.

Residues Phe-11, 43 to 45, and 67 to 69 each bind 5-amino-6-(D-ribitylamino)uracil; these read AYD and AIV. (2S)-2-hydroxy-3-oxobutyl phosphate is bound at residue 72-73; that stretch reads DT. His-75 (proton donor) is an active-site residue. Phe-100 is a binding site for 5-amino-6-(D-ribitylamino)uracil. Arg-115 serves as a coordination point for (2S)-2-hydroxy-3-oxobutyl phosphate.

Belongs to the DMRL synthase family.

It catalyses the reaction (2S)-2-hydroxy-3-oxobutyl phosphate + 5-amino-6-(D-ribitylamino)uracil = 6,7-dimethyl-8-(1-D-ribityl)lumazine + phosphate + 2 H2O + H(+). The protein operates within cofactor biosynthesis; riboflavin biosynthesis; riboflavin from 2-hydroxy-3-oxobutyl phosphate and 5-amino-6-(D-ribitylamino)uracil: step 1/2. Its function is as follows. Catalyzes the formation of 6,7-dimethyl-8-ribityllumazine by condensation of 5-amino-6-(D-ribitylamino)uracil with 3,4-dihydroxy-2-butanone 4-phosphate. This is the penultimate step in the biosynthesis of riboflavin. In Halobacterium salinarum (strain ATCC 29341 / DSM 671 / R1), this protein is 6,7-dimethyl-8-ribityllumazine synthase.